Here is a 464-residue protein sequence, read N- to C-terminus: D-inositol 3-phosphate glycosyltransferase (464 aa).

Over residues 1 to 20 (MEGAPRRPDRHARSEEERHV) the composition is skewed to basic and acidic residues. The interval 1 to 44 (MEGAPRRPDRHARSEEERHVSQYASRLGRRSPAAPTRRRMLRKP) is disordered. His-53 lines the 1D-myo-inositol 3-phosphate pocket. UDP-N-acetyl-alpha-D-glucosamine is bound by residues 59 to 60 (QP) and Gly-67. 1D-myo-inositol 3-phosphate contacts are provided by residues 64-69 (DAGGMN), Lys-122, Tyr-155, Thr-179, and Arg-199. Arg-274, Lys-279, and Val-340 together coordinate UDP-N-acetyl-alpha-D-glucosamine. 3 residues coordinate Mg(2+): Phe-349, Arg-350, and Ala-352. 2 residues coordinate UDP-N-acetyl-alpha-D-glucosamine: Glu-362 and Glu-370. Position 376 (Thr-376) interacts with Mg(2+).

This sequence belongs to the glycosyltransferase group 1 family. MshA subfamily. In terms of assembly, homodimer.

The catalysed reaction is 1D-myo-inositol 3-phosphate + UDP-N-acetyl-alpha-D-glucosamine = 1D-myo-inositol 2-acetamido-2-deoxy-alpha-D-glucopyranoside 3-phosphate + UDP + H(+). Its function is as follows. Catalyzes the transfer of a N-acetyl-glucosamine moiety to 1D-myo-inositol 3-phosphate to produce 1D-myo-inositol 2-acetamido-2-deoxy-glucopyranoside 3-phosphate in the mycothiol biosynthesis pathway. The protein is D-inositol 3-phosphate glycosyltransferase of Streptomyces avermitilis (strain ATCC 31267 / DSM 46492 / JCM 5070 / NBRC 14893 / NCIMB 12804 / NRRL 8165 / MA-4680).